The following is a 268-amino-acid chain: Ribosomal RNA small subunit methyltransferase A (268 aa).

Positions 18, 20, 45, 66, 91, and 112 each coordinate S-adenosyl-L-methionine.

It belongs to the class I-like SAM-binding methyltransferase superfamily. rRNA adenine N(6)-methyltransferase family. RsmA subfamily.

The protein resides in the cytoplasm. The enzyme catalyses adenosine(1518)/adenosine(1519) in 16S rRNA + 4 S-adenosyl-L-methionine = N(6)-dimethyladenosine(1518)/N(6)-dimethyladenosine(1519) in 16S rRNA + 4 S-adenosyl-L-homocysteine + 4 H(+). In terms of biological role, specifically dimethylates two adjacent adenosines (A1518 and A1519) in the loop of a conserved hairpin near the 3'-end of 16S rRNA in the 30S particle. May play a critical role in biogenesis of 30S subunits. The polypeptide is Ribosomal RNA small subunit methyltransferase A (Shewanella sp. (strain MR-7)).